Consider the following 68-residue polypeptide: UPF0435 protein Sca_1453 (68 aa).

Belongs to the UPF0435 family.

The chain is UPF0435 protein Sca_1453 from Staphylococcus carnosus (strain TM300).